The primary structure comprises 437 residues: Glutamate-1-semialdehyde 2,1-aminomutase (437 aa).

At lysine 274 the chain carries N6-(pyridoxal phosphate)lysine.

This sequence belongs to the class-III pyridoxal-phosphate-dependent aminotransferase family. HemL subfamily. As to quaternary structure, homodimer. It depends on pyridoxal 5'-phosphate as a cofactor.

The protein resides in the cytoplasm. The catalysed reaction is (S)-4-amino-5-oxopentanoate = 5-aminolevulinate. It participates in porphyrin-containing compound metabolism; protoporphyrin-IX biosynthesis; 5-aminolevulinate from L-glutamyl-tRNA(Glu): step 2/2. This chain is Glutamate-1-semialdehyde 2,1-aminomutase, found in Leptothrix cholodnii (strain ATCC 51168 / LMG 8142 / SP-6) (Leptothrix discophora (strain SP-6)).